The primary structure comprises 288 residues: Mycothiol S-conjugate amidase (288 aa).

Zn(2+) contacts are provided by histidine 12, aspartate 15, and histidine 142.

This sequence belongs to the MshB deacetylase family. Mca subfamily. As to quaternary structure, monomer. It depends on Zn(2+) as a cofactor.

The catalysed reaction is mycothiol S-conjugate + H2O = an N-acetyl-L-cysteine-S-conjugate + 1D-myo-inositol 2-amino-2-deoxy-alpha-D-glucopyranoside. Partially inhibited by MSH when MSmB (a bimane derivative of MSH) is used as substrate. A mycothiol (MSH, N-acetyl-cysteinyl-glucosaminyl-inositol) S-conjugate amidase, it recycles conjugated MSH to the N-acetyl cysteine conjugate and the MSH precursor. Involved in MSH-dependent detoxification of a number of alkylating agents and antibiotics. Activity is specific for the mycothiol moiety. The chain is Mycothiol S-conjugate amidase from Mycolicibacterium smegmatis (strain ATCC 700084 / mc(2)155) (Mycobacterium smegmatis).